The chain runs to 269 residues: Small ribosomal subunit protein eS1 (269 aa).

Residues methionine 1 to lysine 20 are disordered.

This sequence belongs to the eukaryotic ribosomal protein eS1 family. In terms of assembly, component of the small ribosomal subunit. Mature ribosomes consist of a small (40S) and a large (60S) subunit. The 40S subunit contains about 33 different proteins and 1 molecule of RNA (18S). The 60S subunit contains about 49 different proteins and 3 molecules of RNA (28S, 5.8S and 5S).

Its subcellular location is the cytoplasm. In terms of biological role, has an essential role in oogenesis. The sequence is that of Small ribosomal subunit protein eS1 from Anopheles gambiae (African malaria mosquito).